Consider the following 495-residue polypeptide: Phosphomethylpyrimidine synthase (495 aa).

Substrate is bound by residues Asn125, Met154, Tyr183, His219, 239-241 (SRG), 280-283 (DGLR), and Glu319. Position 323 (His323) interacts with Zn(2+). Tyr346 contributes to the substrate binding site. His387 contacts Zn(2+). [4Fe-4S] cluster is bound by residues Cys467, Cys470, and Cys475.

Belongs to the ThiC family. Requires [4Fe-4S] cluster as cofactor.

The enzyme catalyses 5-amino-1-(5-phospho-beta-D-ribosyl)imidazole + S-adenosyl-L-methionine = 4-amino-2-methyl-5-(phosphooxymethyl)pyrimidine + CO + 5'-deoxyadenosine + formate + L-methionine + 3 H(+). It participates in cofactor biosynthesis; thiamine diphosphate biosynthesis. Catalyzes the synthesis of the hydroxymethylpyrimidine phosphate (HMP-P) moiety of thiamine from aminoimidazole ribotide (AIR) in a radical S-adenosyl-L-methionine (SAM)-dependent reaction. In Leptospira interrogans serogroup Icterohaemorrhagiae serovar copenhageni (strain Fiocruz L1-130), this protein is Phosphomethylpyrimidine synthase.